We begin with the raw amino-acid sequence, 265 residues long: UPF0294 protein KPK_4510 (265 aa).

Belongs to the UPF0294 family.

The protein resides in the cytoplasm. This Klebsiella pneumoniae (strain 342) protein is UPF0294 protein KPK_4510.